The chain runs to 207 residues: MLSLTAESCELFNIPFYQFAQMKKFCPEDIPAIKADYKLHWDNWKAIIQSVSAQLGTPFAKPHIESWTNGWQVRAHFFAYFKYEFNQNSAAIFSVLLNRRRLRVCLDWHCYRADRSQINVQQYNQWLDQFDFKQFADFEIWREDESEYDDFRQVKVISEKNLILRSDEDFWCIGKSIEKAELNQIDPVLFITHTIQQLQPLYDRCHQ.

This is an uncharacterized protein from Haemophilus influenzae (strain ATCC 51907 / DSM 11121 / KW20 / Rd).